The chain runs to 746 residues: Exostosin-1 (746 aa).

Residues 1–7 (MQAKKRY) lie on the Cytoplasmic side of the membrane. A helical; Signal-anchor for type II membrane protein transmembrane segment spans residues 8 to 28 (FILLSAGSCLALLFYFGGLQF). The Lumenal segment spans residues 29 to 746 (RASRSHSRRE…RKKYRDIERL (718 aa)). Residue Asn89 is glycosylated (N-linked (GlcNAc...) asparagine). 2 cysteine pairs are disulfide-bonded: Cys98/Cys103 and Cys109/Cys152. Positions 166 and 203 each coordinate a protein. UDP contacts are provided by Lys267, Lys269, Tyr271, and Arg280. Cys298 and Cys312 are oxidised to a cystine. Residue His300 coordinates a protein. Tyr319 and Tyr324 together coordinate UDP. Asn330 carries N-linked (GlcNAc...) asparagine glycosylation. Cystine bridges form between Cys334–Cys355 and Cys652–Cys704. UDP contacts are provided by Arg346 and Glu349.

The protein belongs to the glycosyltransferase 47 family. Part of the heparan sulfate polymerase, a dimeric complex composed of EXT1 and EXT2. Could also form homooligomeric complexes. Interacts with NDST1. N-glycosylated.

It is found in the golgi apparatus membrane. The protein localises to the golgi apparatus. It localises to the cis-Golgi network membrane. Its subcellular location is the endoplasmic reticulum membrane. It carries out the reaction 3-O-{alpha-D-GlcNAc-[(1-&gt;4)-beta-D-GlcA-(1-&gt;4)-alpha-D-GlcNAc](n)-(1-&gt;4)-beta-D-GlcA-(1-&gt;3)-beta-D-Gal-(1-&gt;3)-beta-D-Gal-(1-&gt;4)-beta-D-Xyl}-L-seryl-[protein] + UDP-alpha-D-glucuronate = 3-O-{[(1-&gt;4)-beta-D-GlcA-(1-&gt;4)-alpha-D-GlcNAc](n+1)-(1-&gt;4)-beta-D-GlcA-(1-&gt;3)-beta-D-Gal-(1-&gt;3)-beta-D-Gal-(1-&gt;4)-beta-D-Xyl}-L-seryl-[protein] + UDP + H(+). It participates in protein modification; protein glycosylation. In terms of biological role, glycosyltransferase forming with EXT2 the heterodimeric heparan sulfate polymerase which catalyzes the elongation of the heparan sulfate glycan backbone. Glycan backbone extension consists in the alternating transfer of (1-&gt;4)-beta-D-GlcA and (1-&gt;4)-alpha-D-GlcNAc residues from their respective UDP-sugar donors. Both EXT1 and EXT2 are required for the full activity of the polymerase since EXT1 bears the N-acetylglucosaminyl-proteoglycan 4-beta-glucuronosyltransferase activity within the complex while EXT2 carries the glucuronosyl-N-acetylglucosaminyl-proteoglycan 4-alpha-N-acetylglucosaminyltransferase activity. Heparan sulfate proteoglycans are ubiquitous components of the extracellular matrix and play an important role in tissue homeostasis and signaling. This is Exostosin-1 (EXT1) from Bos taurus (Bovine).